We begin with the raw amino-acid sequence, 600 residues long: Potassium-transporting ATPase potassium-binding subunit (600 aa).

The next 11 helical transmembrane spans lie at 6-26 (IILL…LGTY), 65-85 (GYAI…YAVQ), 136-156 (ALSG…YALI), 179-199 (LYVL…QGVI), 283-303 (FSNL…CFTF), 314-334 (WAIL…VMGA), 367-387 (FGIS…CGAV), 419-439 (GLYG…LMIG), 458-478 (SLVI…AVVL), 523-543 (VMLA…VLAI), and 566-586 (LFIA…YVPA).

Belongs to the KdpA family. In terms of assembly, the system is composed of three essential subunits: KdpA, KdpB and KdpC.

The protein localises to the cell inner membrane. In terms of biological role, part of the high-affinity ATP-driven potassium transport (or Kdp) system, which catalyzes the hydrolysis of ATP coupled with the electrogenic transport of potassium into the cytoplasm. This subunit binds the periplasmic potassium ions and delivers the ions to the membrane domain of KdpB through an intramembrane tunnel. The polypeptide is Potassium-transporting ATPase potassium-binding subunit (Janthinobacterium sp. (strain Marseille) (Minibacterium massiliensis)).